An 89-amino-acid chain; its full sequence is Small ribosomal subunit protein uS15 (89 aa).

It belongs to the universal ribosomal protein uS15 family. In terms of assembly, part of the 30S ribosomal subunit. Forms a bridge to the 50S subunit in the 70S ribosome, contacting the 23S rRNA.

Its function is as follows. One of the primary rRNA binding proteins, it binds directly to 16S rRNA where it helps nucleate assembly of the platform of the 30S subunit by binding and bridging several RNA helices of the 16S rRNA. Functionally, forms an intersubunit bridge (bridge B4) with the 23S rRNA of the 50S subunit in the ribosome. The polypeptide is Small ribosomal subunit protein uS15 (Oleidesulfovibrio alaskensis (strain ATCC BAA-1058 / DSM 17464 / G20) (Desulfovibrio alaskensis)).